Here is a 708-residue protein sequence, read N- to C-terminus: ABC transporter G family member 18 (708 aa).

The 243-residue stretch at 75-317 (RRRFDFSRRK…FSSFGRPIPE (243 aa)) folds into the ABC transporter domain. 109-116 (GGSGAGKS) provides a ligand contact to ATP. The region spanning 402–612 (AETFILAKRY…PYEAVLINEF (211 aa)) is the ABC transmembrane type-2 domain. The next 7 helical transmembrane spans lie at 421–441 (LIGM…TVYW), 456–476 (FFAF…PVFI), 508–528 (LLAL…LSGG), 537–557 (LIIY…SGLI), 560–580 (VMMS…LGGF), 589–609 (LYWI…AVLI), and 681–701 (LWIT…SLLF).

This sequence belongs to the ABC transporter superfamily. ABCG family. Eye pigment precursor importer (TC 3.A.1.204) subfamily.

The protein resides in the membrane. The sequence is that of ABC transporter G family member 18 (ABCG18) from Arabidopsis thaliana (Mouse-ear cress).